We begin with the raw amino-acid sequence, 95 residues long: Aspartyl/glutamyl-tRNA(Asn/Gln) amidotransferase subunit C (95 aa).

The protein belongs to the GatC family. Heterotrimer of A, B and C subunits.

It carries out the reaction L-glutamyl-tRNA(Gln) + L-glutamine + ATP + H2O = L-glutaminyl-tRNA(Gln) + L-glutamate + ADP + phosphate + H(+). The catalysed reaction is L-aspartyl-tRNA(Asn) + L-glutamine + ATP + H2O = L-asparaginyl-tRNA(Asn) + L-glutamate + ADP + phosphate + 2 H(+). Functionally, allows the formation of correctly charged Asn-tRNA(Asn) or Gln-tRNA(Gln) through the transamidation of misacylated Asp-tRNA(Asn) or Glu-tRNA(Gln) in organisms which lack either or both of asparaginyl-tRNA or glutaminyl-tRNA synthetases. The reaction takes place in the presence of glutamine and ATP through an activated phospho-Asp-tRNA(Asn) or phospho-Glu-tRNA(Gln). This Chlorobium phaeobacteroides (strain DSM 266 / SMG 266 / 2430) protein is Aspartyl/glutamyl-tRNA(Asn/Gln) amidotransferase subunit C.